Reading from the N-terminus, the 394-residue chain is Putative F-box protein At5g66830 (394 aa).

Residues 17 to 63 (DWCWSKLPSDLMQFVFDRLGFADFQRAKSVCSSWLSVSRNSQPNNQI) enclose the F-box domain.

The polypeptide is Putative F-box protein At5g66830 (Arabidopsis thaliana (Mouse-ear cress)).